A 137-amino-acid polypeptide reads, in one-letter code: Small ribosomal subunit protein uS12 (137 aa).

The tract at residues 1–20 is disordered; it reads MPTTNQLVNRGRTSKVQKQN. A 3-methylthioaspartic acid modification is found at D102.

It belongs to the universal ribosomal protein uS12 family. As to quaternary structure, part of the 30S ribosomal subunit. Contacts proteins S8 and S17. May interact with IF1 in the 30S initiation complex.

With S4 and S5 plays an important role in translational accuracy. Its function is as follows. Interacts with and stabilizes bases of the 16S rRNA that are involved in tRNA selection in the A site and with the mRNA backbone. Located at the interface of the 30S and 50S subunits, it traverses the body of the 30S subunit contacting proteins on the other side and probably holding the rRNA structure together. The combined cluster of proteins S8, S12 and S17 appears to hold together the shoulder and platform of the 30S subunit. The chain is Small ribosomal subunit protein uS12 from Mycoplasmopsis synoviae (strain 53) (Mycoplasma synoviae).